Reading from the N-terminus, the 759-residue chain is ARF GTPase-activating protein GIT2 (759 aa).

The Arf-GAP domain occupies 1–124; that stretch reads MSKRLRSNDV…AFVHRLPCRD (124 aa). The C4-type zinc-finger motif lies at 11 to 34; it reads CADCSGPDPSWASVNRGTLICDEC. ANK repeat units lie at residues 132–161, 166–198, and 199–228; these read DLSKQLHSSVRTGNLETCLRLLSLGAQANF, KGSTPLHVASKAGQILQAELLAVYGADPGTHDS, and SGKTPVDYARQGGHRELAERLVEIQYELTD. Disordered stretches follow at residues 376–422 and 469–641; these read VSNQ…DLSD and QSEN…PSTE. The segment covering 385–402 has biased composition (acidic residues); the sequence is QDNDQPDYDSVASDEDTD. Positions 451–478 form a coiled coil; it reads NNNLSGELRIMQKKLQTLQSENSSLRRQ. Over residues 469-489 the composition is skewed to polar residues; sequence QSENSSLRRQATASACQVQTA. Low complexity predominate over residues 555 to 569; that stretch reads TSSSSLPSFPSTLSW. A compositionally biased stretch (basic and acidic residues) spans 570 to 583; that stretch reads SRDESTRRASRLEK.

As to quaternary structure, may form heterooligomers with GIT1. Directly interacts with protein Piccolo/PCLO. Interacts with PPFIA1 and PPFIA2. Interacts with ARHGEF7. Identified in a complex with ARHGEF6 and BIN2. Interacts with PAK3. Interacts with PXN/paxillin. Interacts with TGFB1I1. Forms a complex with EFNB1 and GRB4/NCK2.

In terms of biological role, GTPase-activating protein for ADP ribosylation factor family members, including ARF1. The sequence is that of ARF GTPase-activating protein GIT2 (Git2) from Rattus norvegicus (Rat).